Reading from the N-terminus, the 394-residue chain is Ornithine aminotransferase 1 (394 aa).

The residue at position 252 (Lys-252) is an N6-(pyridoxal phosphate)lysine.

It belongs to the class-III pyridoxal-phosphate-dependent aminotransferase family. OAT subfamily. It depends on pyridoxal 5'-phosphate as a cofactor.

The protein localises to the cytoplasm. The catalysed reaction is a 2-oxocarboxylate + L-ornithine = L-glutamate 5-semialdehyde + an L-alpha-amino acid. Its pathway is amino-acid biosynthesis; L-proline biosynthesis; L-glutamate 5-semialdehyde from L-ornithine: step 1/1. Functionally, catalyzes the interconversion of ornithine to glutamate semialdehyde. The sequence is that of Ornithine aminotransferase 1 from Staphylococcus saprophyticus subsp. saprophyticus (strain ATCC 15305 / DSM 20229 / NCIMB 8711 / NCTC 7292 / S-41).